The chain runs to 270 residues: FKBP-type peptidyl-prolyl cis-trans isomerase FkpA (270 aa).

Residues M1 to A25 form the signal peptide. Residues S164 to K249 enclose the PPIase FKBP-type domain.

The protein belongs to the FKBP-type PPIase family.

The protein localises to the periplasm. The enzyme catalyses [protein]-peptidylproline (omega=180) = [protein]-peptidylproline (omega=0). PPIases accelerate the folding of proteins. It catalyzes the cis-trans isomerization of proline imidic peptide bonds in oligopeptides. The chain is FKBP-type peptidyl-prolyl cis-trans isomerase FkpA (fkpA) from Escherichia coli O157:H7.